Consider the following 417-residue polypeptide: Serine--tRNA ligase (417 aa).

An L-serine-binding site is contributed by 225-227 (TLE). 256–258 (RQE) lines the ATP pocket. Position 279 (Glu279) interacts with L-serine. 343 to 346 (EVSS) serves as a coordination point for ATP. Thr379 contacts L-serine.

The protein belongs to the class-II aminoacyl-tRNA synthetase family. Type-1 seryl-tRNA synthetase subfamily. Homodimer. The tRNA molecule binds across the dimer.

Its subcellular location is the cytoplasm. It carries out the reaction tRNA(Ser) + L-serine + ATP = L-seryl-tRNA(Ser) + AMP + diphosphate + H(+). The enzyme catalyses tRNA(Sec) + L-serine + ATP = L-seryl-tRNA(Sec) + AMP + diphosphate + H(+). Its pathway is aminoacyl-tRNA biosynthesis; selenocysteinyl-tRNA(Sec) biosynthesis; L-seryl-tRNA(Sec) from L-serine and tRNA(Sec): step 1/1. Its function is as follows. Catalyzes the attachment of serine to tRNA(Ser). Is also able to aminoacylate tRNA(Sec) with serine, to form the misacylated tRNA L-seryl-tRNA(Sec), which will be further converted into selenocysteinyl-tRNA(Sec). This chain is Serine--tRNA ligase, found in Mycoplasma genitalium (strain ATCC 33530 / DSM 19775 / NCTC 10195 / G37) (Mycoplasmoides genitalium).